The chain runs to 485 residues: Zinc finger protein 165 (485 aa).

A Glycyl lysine isopeptide (Lys-Gly) (interchain with G-Cter in SUMO2) cross-link involves residue Lys-23. The SCAN box domain maps to 62 to 127 (GPREALSRLR…EEAVTILEDL (66 aa)). Residues Lys-162 and Lys-195 each participate in a glycyl lysine isopeptide (Lys-Gly) (interchain with G-Cter in SUMO2) cross-link. Residues 290-314 (KSCKHGTCDQSFKWNSDFINHQIIY) form a C2H2-type 1; degenerate zinc finger. 5 consecutive C2H2-type zinc fingers follow at residues 344–366 (HQCN…QRIH), 372–394 (YECN…RRIH), 400–422 (FGCK…QRIH), 428–450 (YECS…FRIH), and 456–478 (YECS…QRIH).

Belongs to the krueppel C2H2-type zinc-finger protein family. Expressed specifically in testis.

Its subcellular location is the nucleus. In terms of biological role, may be involved in transcriptional regulation. The polypeptide is Zinc finger protein 165 (ZNF165) (Homo sapiens (Human)).